We begin with the raw amino-acid sequence, 439 residues long: Xaa-Pro dipeptidase (439 aa).

The Mn(2+) site is built by D244, D255, H335, E380, and E418.

It belongs to the peptidase M24B family. Bacterial-type prolidase subfamily. It depends on Mn(2+) as a cofactor.

It catalyses the reaction Xaa-L-Pro dipeptide + H2O = an L-alpha-amino acid + L-proline. In terms of biological role, splits dipeptides with a prolyl residue in the C-terminal position. This Shewanella frigidimarina (strain NCIMB 400) protein is Xaa-Pro dipeptidase.